Here is a 222-residue protein sequence, read N- to C-terminus: Secreted protein D (222 aa).

A signal peptide spans 1-22; it reads MKIYYLFFVLIYLIYFINLVYC. The N-linked (GlcNAc...) asparagine glycan is linked to Asn25.

Belongs to the Sct family.

The protein localises to the secreted. The protein is Secreted protein D of Dictyostelium discoideum (Social amoeba).